Consider the following 261-residue polypeptide: MANLLSKTRRITSILQRSVESLQSDLPYNTIADQLAEIIDCNACIIDGSGIILGYAMKYKTNTDRVEEFFQAKKLPDDYVKSASRIYDTEANLSVENDLTIFPIESKDIYPDGLTTIAPIYGGGMRLGSLIIWRNDKEFNDDDLILIEISSTVVGIQLLNLQTENLEETIRKQTAINMAINTLSYSEMKAVAAILNELDGNEGRLTASVIADRIGITRSVIVNALRKLESAGIIESRSLGMKGTYLKVINEGIFDKLKDYS.

Residues 1–159 (MANLLSKTRR…SSTVVGIQLL (159 aa)) form a GAF domain region. The H-T-H motif DNA-binding region spans 207–226 (ASVIADRIGITRSVIVNALR).

Belongs to the CodY family.

Its subcellular location is the cytoplasm. Its function is as follows. DNA-binding global transcriptional regulator which is involved in the adaptive response to starvation and acts by directly or indirectly controlling the expression of numerous genes in response to nutrient availability. During rapid exponential growth, CodY is highly active and represses genes whose products allow adaptation to nutrient depletion. This is Global transcriptional regulator CodY from Streptococcus mutans serotype c (strain ATCC 700610 / UA159).